A 379-amino-acid polypeptide reads, in one-letter code: Cytochrome b (379 aa).

The next 4 helical transmembrane spans lie at 33 to 53 (FGSLLGVCLMIQILTGLFLAM), 77 to 98 (WLIRYLHANGASMFFICLFIHV), 113 to 133 (WNIGIILFLTTMATAFVGYVL), and 178 to 198 (FFAFHFILPFIITAFALVHLL). Heme b-binding residues include histidine 83 and histidine 97. 2 residues coordinate heme b: histidine 182 and histidine 196. Histidine 201 contacts a ubiquinone. 4 helical membrane passes run 226–246 (IKDLLGILLLLLALMILALFF), 288–308 (LGGVLALILSILILAAFPLLN), 320–340 (ITQTIYWTLIVNLLVLTWIGG), and 347–367 (FTTIGQIASITYFTTIIILMP).

The protein belongs to the cytochrome b family. The cytochrome bc1 complex contains 11 subunits: 3 respiratory subunits (MT-CYB, CYC1 and UQCRFS1), 2 core proteins (UQCRC1 and UQCRC2) and 6 low-molecular weight proteins (UQCRH/QCR6, UQCRB/QCR7, UQCRQ/QCR8, UQCR10/QCR9, UQCR11/QCR10 and a cleavage product of UQCRFS1). This cytochrome bc1 complex then forms a dimer. Heme b serves as cofactor.

The protein localises to the mitochondrion inner membrane. In terms of biological role, component of the ubiquinol-cytochrome c reductase complex (complex III or cytochrome b-c1 complex) that is part of the mitochondrial respiratory chain. The b-c1 complex mediates electron transfer from ubiquinol to cytochrome c. Contributes to the generation of a proton gradient across the mitochondrial membrane that is then used for ATP synthesis. The chain is Cytochrome b (MT-CYB) from Akodon aerosus (Highland grass mouse).